The chain runs to 107 residues: Thioredoxin-1 (107 aa).

The Thioredoxin domain maps to 2 to 106 (ASVRTMNDYH…LTNMMAKLVK (105 aa)). Residues C31 and C34 each act as nucleophile in the active site. A disulfide bridge links C31 with C34.

Belongs to the thioredoxin family. As to expression, ovary specific. Expressed present in the nurse cells from stage 9 of ovary development and is transported into the oocyte. Expressed throughout oogenesis.

The protein resides in the nucleus. Participates in various redox reactions through the reversible oxidation of its active center dithiol to a disulfide and catalyzes dithiol-disulfide exchange reactions. As a reducing substrate of peroxiredoxin 1, thioredoxin 2 is preferred over thioredoxin 1. Required for female meiosis and early embryonic development. This chain is Thioredoxin-1 (dhd), found in Drosophila melanogaster (Fruit fly).